A 637-amino-acid polypeptide reads, in one-letter code: Biosynthetic arginine decarboxylase (637 aa).

An N6-(pyridoxal phosphate)lysine modification is found at Lys107. 289 to 299 contributes to the substrate binding site; sequence LDVGGGLGVDY.

This sequence belongs to the Orn/Lys/Arg decarboxylase class-II family. SpeA subfamily. Mg(2+) serves as cofactor. Pyridoxal 5'-phosphate is required as a cofactor.

It carries out the reaction L-arginine + H(+) = agmatine + CO2. Functionally, catalyzes the biosynthesis of agmatine from arginine. The chain is Biosynthetic arginine decarboxylase from Thermosynechococcus vestitus (strain NIES-2133 / IAM M-273 / BP-1).